The chain runs to 558 residues: Arginine--tRNA ligase (558 aa).

The 'HIGH' region motif lies at 134–144 (ANPTGPMVLVQ).

It belongs to the class-I aminoacyl-tRNA synthetase family. As to quaternary structure, monomer.

The protein localises to the cytoplasm. The enzyme catalyses tRNA(Arg) + L-arginine + ATP = L-arginyl-tRNA(Arg) + AMP + diphosphate. In Symbiobacterium thermophilum (strain DSM 24528 / JCM 14929 / IAM 14863 / T), this protein is Arginine--tRNA ligase.